Here is a 210-residue protein sequence, read N- to C-terminus: CKLF-like MARVEL transmembrane domain-containing protein 2B (210 aa).

4 consecutive transmembrane segments (helical) span residues 35 to 55 (FWAQGHAECKSLIMILLIAAM), 65 to 85 (PIVILLLTMELSICAFFFFLY), 103 to 123 (LMNDLACSTFLIGGIFFALEA), and 127 to 147 (LPVPYLTGMILMGVTAFISII). Positions 35-157 (FWAQGHAECK…DLCLQRRQFK (123 aa)) constitute an MARVEL domain.

Belongs to the chemokine-like factor family.

Its subcellular location is the membrane. The chain is CKLF-like MARVEL transmembrane domain-containing protein 2B (Cmtm2b) from Mus musculus (Mouse).